The chain runs to 462 residues: ATP synthase subunit beta (462 aa).

151-158 (GGAGVGKT) is a binding site for ATP.

This sequence belongs to the ATPase alpha/beta chains family. F-type ATPases have 2 components, CF(1) - the catalytic core - and CF(0) - the membrane proton channel. CF(1) has five subunits: alpha(3), beta(3), gamma(1), delta(1), epsilon(1). CF(0) has three main subunits: a(1), b(2) and c(9-12). The alpha and beta chains form an alternating ring which encloses part of the gamma chain. CF(1) is attached to CF(0) by a central stalk formed by the gamma and epsilon chains, while a peripheral stalk is formed by the delta and b chains.

It is found in the cell inner membrane. The enzyme catalyses ATP + H2O + 4 H(+)(in) = ADP + phosphate + 5 H(+)(out). Its function is as follows. Produces ATP from ADP in the presence of a proton gradient across the membrane. The catalytic sites are hosted primarily by the beta subunits. The chain is ATP synthase subunit beta from Chlorobaculum parvum (strain DSM 263 / NCIMB 8327) (Chlorobium vibrioforme subsp. thiosulfatophilum).